We begin with the raw amino-acid sequence, 327 residues long: GTPase Obg (327 aa).

The region spanning 1 to 159 is the Obg domain; that stretch reads MQFIDQANII…WEVQLELKLL (159 aa). In terms of domain architecture, OBG-type G spans 160-327; that stretch reads AEVGIIGLPN…SLLSEVWKRI (168 aa). Residues 166-173, 191-195, 213-216, 280-283, and 309-311 contribute to the ATP site; these read GLPNAGKS, FTTLI, DIPG, NKME, and SSS. Residues serine 173 and threonine 193 each coordinate Mg(2+).

This sequence belongs to the TRAFAC class OBG-HflX-like GTPase superfamily. OBG GTPase family. As to quaternary structure, monomer. Requires Mg(2+) as cofactor.

It is found in the cytoplasm. Functionally, an essential GTPase which binds GTP, GDP and possibly (p)ppGpp with moderate affinity, with high nucleotide exchange rates and a fairly low GTP hydrolysis rate. Plays a role in control of the cell cycle, stress response, ribosome biogenesis and in those bacteria that undergo differentiation, in morphogenesis control. In Prochlorococcus marinus (strain MIT 9215), this protein is GTPase Obg.